The sequence spans 205 residues: High frequency lysogenization protein HflD homolog (205 aa).

The protein belongs to the HflD family.

The protein resides in the cytoplasm. It localises to the cell inner membrane. The sequence is that of High frequency lysogenization protein HflD homolog from Shewanella sp. (strain W3-18-1).